A 299-amino-acid polypeptide reads, in one-letter code: Ribosomal RNA small subunit methyltransferase H (299 aa).

S-adenosyl-L-methionine is bound by residues 36-38, Asp55, Asp103, and Gln110; that span reads GGH. Basic and acidic residues-rich tracts occupy residues 268-282 and 289-299; these read KPVRPSEEEIRENPR and RAAERIEKGGD. The disordered stretch occupies residues 268–299; the sequence is KPVRPSEEEIRENPRARSGRLRAAERIEKGGD.

This sequence belongs to the methyltransferase superfamily. RsmH family.

It is found in the cytoplasm. It catalyses the reaction cytidine(1402) in 16S rRNA + S-adenosyl-L-methionine = N(4)-methylcytidine(1402) in 16S rRNA + S-adenosyl-L-homocysteine + H(+). In terms of biological role, specifically methylates the N4 position of cytidine in position 1402 (C1402) of 16S rRNA. This chain is Ribosomal RNA small subunit methyltransferase H, found in Thermotoga sp. (strain RQ2).